A 920-amino-acid polypeptide reads, in one-letter code: Anillin-related medial ring protein mid1 (920 aa).

Positions 1-452 are disordered; the sequence is MKEQEFSYRE…LSSEDLRHPS (452 aa). Residues S15 and S24 each carry the phosphoserine modification. T34 carries the phosphothreonine modification. Residues S46 and S62 each carry the phosphoserine modification. The Nuclear export sequence (NES) 1 motif lies at 69 to 81; it reads LNVATDLLESLDL. S95 is modified (phosphoserine). Residues 461-481 show a composition bias toward polar residues; the sequence is RTYSNYCENEPNKSSQSLVSS. Position 531 is a phosphoserine (S531). The tract at residues 538 to 561 is disordered; that stretch reads DLPSQDKSTSYEVPNGTENQSPRP. Positions 542–561 are enriched in polar residues; it reads QDKSTSYEVPNGTENQSPRP. Positions 551 to 920 are cryptic lipid-binding C2 domain; sequence PNGTENQSPR…WLQEYVNFMA (370 aa). The Nuclear localization sequence (NLS) signature appears at 681-710; it reads RKFFDKLFNRRKKRKLNKAAAVENSKAKKS. The Nuclear export sequence (NES) 2 signature appears at 763–773; it reads LGNLTLTCLYI. Positions 802–901 constitute a PH domain; it reads LYNEGYLYRL…WLQVMNSRSF (100 aa).

In terms of assembly, homodimer. Interacts with blt1 and cdr2. Interacts with gef2. Interacts with plo1 and rng2. Interacts with fhk2 and sep1. Interacts with clp1. In terms of processing, phosphorylated. At the onset of mitosis, becomes hyperphosphorylated, leaves the nucleus, and forms a medial ring. Phosphorylation by plo1 and other kinases may contribute to solubilizing mid1 for export from the nucleus. Phosphorylation by sid2 drives removal from the cortex at the actomyosin contractile ring constriction onset.

The protein resides in the nucleus. It is found in the cytoplasm. Its subcellular location is the cell cortex. It localises to the cytoskeleton. Functionally, scaffold protein that anchors the contractile ring (CR) at the cell equator during cytokinesis. At the onset of mitosis, membrane-bound oligomers of mid1 assemble recruitment platforms for cytokinetic ring components at the medial cortex and stabilize the ring position during its compaction. Recruits dephosphorylated myo2, but also rng2, clp1 and cdc15 to nodes and to place cytokinetic nodes around the cell equator the medial cortex to promote the ring assembly in cooperation with F-actin. Necessary to stabilize the mitotic spindle perpendicular to the axis of cell division. Also recruits the cdr2 kinase to the CR. Its function is as follows. In the nucleus, binds to the promoter regions of M-G1 transcribed genes to negatively regulate their expression. In Schizosaccharomyces pombe (strain 972 / ATCC 24843) (Fission yeast), this protein is Anillin-related medial ring protein mid1.